We begin with the raw amino-acid sequence, 1184 residues long: DNA-directed RNA polymerase subunit beta (1184 aa).

This sequence belongs to the RNA polymerase beta chain family. In terms of assembly, the RNAP catalytic core consists of 2 alpha, 1 beta, 1 beta' and 1 omega subunit. When a sigma factor is associated with the core the holoenzyme is formed, which can initiate transcription.

The enzyme catalyses RNA(n) + a ribonucleoside 5'-triphosphate = RNA(n+1) + diphosphate. Its function is as follows. DNA-dependent RNA polymerase catalyzes the transcription of DNA into RNA using the four ribonucleoside triphosphates as substrates. This is DNA-directed RNA polymerase subunit beta from Fusobacterium nucleatum subsp. nucleatum (strain ATCC 25586 / DSM 15643 / BCRC 10681 / CIP 101130 / JCM 8532 / KCTC 2640 / LMG 13131 / VPI 4355).